We begin with the raw amino-acid sequence, 374 residues long: MATLGFNTRRIQTPSLPRIPKPSSFTKPIKTHHLFSSETLLKRCRFVSRSLPESSLSITKEQEVANEVEEDDPTSELSYLDPESDADSIKEWELDFCSRPILDSRGKKIWELVVCDASLSLQVTKYFPNNVINSITLKDAIVTITQDLGVPLPEKIRFFRSQMQTIITKACKELAIKAVPSKRCLSLFLWLQERYDTVYTRHPGFQKGSLPLLSLDNPFPMNLPENLFGEKWAFVQLPYSAVREEISDFDEKFVFGASLDLDLLGIEVDENTLIPGLSVATSRAKPLAAWMNGLEVCSIEADSSKGCLILSVGIATRYVYATYKKTPVTTDEAEAWESAKKTSGGLHFLAIQDDLDSDDCVGFWLLIDLPPPPV.

The N-terminal 64 residues, 1 to 64, are a transit peptide targeting the chloroplast; the sequence is MATLGFNTRR…SLSITKEQEV (64 aa). The tract at residues 58–84 is disordered; sequence ITKEQEVANEVEEDDPTSELSYLDPES. The span at 64-74 shows a compositional bias: acidic residues; sequence VANEVEEDDPT.

Its subcellular location is the plastid. The protein localises to the chloroplast. Functionally, nuclear genome-encoded A/U-rich RNA-binding protein involved in the biogenesis of photosystem I (PSI) and II (PSII). Required for the light-controlled accumulation of PSI and PSII during early plant development. Does not seem to be required for the translation of mRNAs of the PSI subunits. The sequence is that of Protein TAB2 homolog, chloroplastic from Arabidopsis thaliana (Mouse-ear cress).